A 27-amino-acid chain; its full sequence is Metalloproteinase inhibitor 1 (27 aa).

Positions 1 to 12 (IEPERQEEEEEE) are enriched in acidic residues. The segment at 1 to 27 (IEPERQEEEEEETRQRVRRGQVRQQQQ) is disordered.

Functionally, metalloproteinase inhibitor, active on a globulinase from L.albus seeds, thermolysin and gelatinase B. This chain is Metalloproteinase inhibitor 1, found in Lupinus albus (White lupine).